The primary structure comprises 184 residues: Pyridoxal 5'-phosphate synthase subunit PdxT (184 aa).

46 to 48 (GES) is an L-glutamine binding site. Cys-75 (nucleophile) is an active-site residue. L-glutamine-binding positions include Arg-101 and 129-130 (IR). Residues His-165 and Glu-167 each act as charge relay system in the active site.

This sequence belongs to the glutaminase PdxT/SNO family. In the presence of PdxS, forms a dodecamer of heterodimers. Only shows activity in the heterodimer.

It carries out the reaction aldehydo-D-ribose 5-phosphate + D-glyceraldehyde 3-phosphate + L-glutamine = pyridoxal 5'-phosphate + L-glutamate + phosphate + 3 H2O + H(+). The catalysed reaction is L-glutamine + H2O = L-glutamate + NH4(+). Its pathway is cofactor biosynthesis; pyridoxal 5'-phosphate biosynthesis. Functionally, catalyzes the hydrolysis of glutamine to glutamate and ammonia as part of the biosynthesis of pyridoxal 5'-phosphate. The resulting ammonia molecule is channeled to the active site of PdxS. The chain is Pyridoxal 5'-phosphate synthase subunit PdxT from Staphylococcus haemolyticus (strain JCSC1435).